The primary structure comprises 689 residues: DNA topoisomerase 1 (689 aa).

Residues 3–113 (DNLVIVESPA…KENRVVFNEI (111 aa)) enclose the Toprim domain. Glutamate 9 and aspartate 82 together coordinate Mg(2+). Residues 129–557 (EMNLVDAQQA…FFSSFKQDVE (429 aa)) enclose the Topo IA-type catalytic domain. Residues 163-168 (SAGRVQ) form an interaction with DNA region. Tyrosine 298 serves as the catalytic O-(5'-phospho-DNA)-tyrosine intermediate. The tract at residues 328–357 (SKRKASGKQGDQDAHEAIRPSSTMRTPDDM) is disordered. 3 C4-type zinc fingers span residues 577 to 603 (CEVC…FPDC), 617 to 645 (CPKC…YPEC), and 658 to 681 (CPKC…CSNC).

Belongs to the type IA topoisomerase family. In terms of assembly, monomer. Mg(2+) serves as cofactor.

The catalysed reaction is ATP-independent breakage of single-stranded DNA, followed by passage and rejoining.. Releases the supercoiling and torsional tension of DNA, which is introduced during the DNA replication and transcription, by transiently cleaving and rejoining one strand of the DNA duplex. Introduces a single-strand break via transesterification at a target site in duplex DNA. The scissile phosphodiester is attacked by the catalytic tyrosine of the enzyme, resulting in the formation of a DNA-(5'-phosphotyrosyl)-enzyme intermediate and the expulsion of a 3'-OH DNA strand. The free DNA strand then undergoes passage around the unbroken strand, thus removing DNA supercoils. Finally, in the religation step, the DNA 3'-OH attacks the covalent intermediate to expel the active-site tyrosine and restore the DNA phosphodiester backbone. This is DNA topoisomerase 1 from Staphylococcus aureus (strain bovine RF122 / ET3-1).